Reading from the N-terminus, the 238-residue chain is MGRKWANIVAKKTAKDGATSKVYAKFGVEIYVAAKQGEPDPELNTTLKFVIDRAKQAQVPKHVIDKAIDKAKGNTDETFVEGRYEGFGPNGSMIIVDTLTSNVNRTAANVRTAYGKNGGNMGASGSVSYLFDKKGVIVFAGDDADSVFEQLLEADVDVDDVEAEEGTITVYTAPTDLHKGIQALRDNGVEEFQVTELEMIPQSEVVLEGDDLETFEKLIDALESDDDVQKVYHNVADF.

It belongs to the TACO1 family. YeeN subfamily.

Its subcellular location is the cytoplasm. This chain is Probable transcriptional regulatory protein SpyM51586, found in Streptococcus pyogenes serotype M5 (strain Manfredo).